We begin with the raw amino-acid sequence, 483 residues long: UDP-N-acetylmuramoyl-L-alanyl-D-glutamate--2,6-diaminopimelate ligase (483 aa).

Residue serine 30 coordinates UDP-N-acetyl-alpha-D-muramoyl-L-alanyl-D-glutamate. 109–115 serves as a coordination point for ATP; that stretch reads GTNGKTT. Residues 151–152, serine 178, and arginine 186 contribute to the UDP-N-acetyl-alpha-D-muramoyl-L-alanyl-D-glutamate site; that span reads TT. An N6-carboxylysine modification is found at lysine 218. Meso-2,6-diaminopimelate contacts are provided by residues arginine 380, 403 to 406, glycine 453, and glutamate 457; that span reads DNPR. The Meso-diaminopimelate recognition motif motif lies at 403–406; sequence DNPR.

Belongs to the MurCDEF family. MurE subfamily. Requires Mg(2+) as cofactor. Post-translationally, carboxylation is probably crucial for Mg(2+) binding and, consequently, for the gamma-phosphate positioning of ATP.

Its subcellular location is the cytoplasm. It carries out the reaction UDP-N-acetyl-alpha-D-muramoyl-L-alanyl-D-glutamate + meso-2,6-diaminopimelate + ATP = UDP-N-acetyl-alpha-D-muramoyl-L-alanyl-gamma-D-glutamyl-meso-2,6-diaminopimelate + ADP + phosphate + H(+). The protein operates within cell wall biogenesis; peptidoglycan biosynthesis. Its function is as follows. Catalyzes the addition of meso-diaminopimelic acid to the nucleotide precursor UDP-N-acetylmuramoyl-L-alanyl-D-glutamate (UMAG) in the biosynthesis of bacterial cell-wall peptidoglycan. This is UDP-N-acetylmuramoyl-L-alanyl-D-glutamate--2,6-diaminopimelate ligase from Chlamydia pneumoniae (Chlamydophila pneumoniae).